The chain runs to 62 residues: Cytotoxin 11 (62 aa).

Cystine bridges form between Cys-3–Cys-22, Cys-15–Cys-40, Cys-44–Cys-55, and Cys-56–Cys-61.

This sequence belongs to the three-finger toxin family. Short-chain subfamily. Orphan group XV sub-subfamily. As to expression, expressed by the venom gland.

It localises to the secreted. Its subcellular location is the target cell membrane. Functionally, has low cytotoxic activity. The chain is Cytotoxin 11 from Naja annulifera (Banded Egyptian cobra).